The chain runs to 884 residues: Protein translocase subunit SecA (884 aa).

Residues Gln88, 106-110 (GEGKT), and Asp509 each bind ATP. Positions 822–884 (EQKKLKMSGA…PKKGLFANND (63 aa)) are disordered. Basic and acidic residues predominate over residues 833–842 (KGGEDLEETK). Zn(2+) is bound by residues Cys858, Cys860, Cys869, and His870.

Belongs to the SecA family. Monomer and homodimer. Part of the essential Sec protein translocation apparatus which comprises SecA, SecYEG and auxiliary proteins SecDF-YajC and YidC. Requires Zn(2+) as cofactor.

The protein resides in the cell inner membrane. It is found in the cytoplasm. The enzyme catalyses ATP + H2O + cellular proteinSide 1 = ADP + phosphate + cellular proteinSide 2.. Its function is as follows. Part of the Sec protein translocase complex. Interacts with the SecYEG preprotein conducting channel. Has a central role in coupling the hydrolysis of ATP to the transfer of proteins into and across the cell membrane, serving as an ATP-driven molecular motor driving the stepwise translocation of polypeptide chains across the membrane. This Campylobacter hominis (strain ATCC BAA-381 / DSM 21671 / CCUG 45161 / LMG 19568 / NCTC 13146 / CH001A) protein is Protein translocase subunit SecA.